Consider the following 317-residue polypeptide: MEVANHNNNNNGCTNDKESPCISSVLPGWFSEISPLWPGEAHSLKVEKILFQGKSDYQDVMVFQSTTYGKVLVLDGVIQLTERDECAYQEMITHLPLCSIPNPKKVLVIGGGDGGVLREVSRHSSVEQIDICEIDKMVVEVAKQFFPDVAVGYEDPRVNLHIGDGVAFLKNVPAGTYDAVIVDSSDPIGPAQELFEKPFFETIARALRPGGVVSTQAESIWLHMHIIEEIVANCREIFKGSVNYAWTTVPTYPSGMIGFMLCSTEGPAVDFKNPINPIDDESHGQTIGPLKFYNSEIHQASFCLPSFAKRVIETKGK.

Residues P27–T264 form the PABS domain. Q58 serves as a coordination point for S-adenosyl 3-(methylsulfanyl)propylamine. Residue Y88 coordinates putrescine. S-adenosyl 3-(methylsulfanyl)propylamine contacts are provided by residues Q89, D113, E133, D164–G165, and D183. D183 functions as the Proton acceptor in the catalytic mechanism. Putrescine-binding positions include D183–D186 and Y252.

Belongs to the spermidine/spermine synthase family.

It carries out the reaction S-adenosyl 3-(methylsulfanyl)propylamine + putrescine = S-methyl-5'-thioadenosine + spermidine + H(+). The protein operates within amine and polyamine biosynthesis; spermidine biosynthesis; spermidine from putrescine: step 1/1. The chain is Spermidine synthase 2 from Datura stramonium (Jimsonweed).